Consider the following 348-residue polypeptide: Uroporphyrinogen decarboxylase (348 aa).

Residues 27–31 (RQAGR), Phe46, Asp76, Tyr152, Ser207, and His320 each bind substrate.

It belongs to the uroporphyrinogen decarboxylase family. Homodimer.

It localises to the cytoplasm. It catalyses the reaction uroporphyrinogen III + 4 H(+) = coproporphyrinogen III + 4 CO2. It participates in porphyrin-containing compound metabolism; protoporphyrin-IX biosynthesis; coproporphyrinogen-III from 5-aminolevulinate: step 4/4. Functionally, catalyzes the decarboxylation of four acetate groups of uroporphyrinogen-III to yield coproporphyrinogen-III. The polypeptide is Uroporphyrinogen decarboxylase (Bacillus cereus (strain G9842)).